The chain runs to 550 residues: Methyl-accepting chemotaxis protein PcaY (550 aa).

At 1–19 the chain is on the cytoplasmic side; it reads MVPTRSTARMLANLKIRTG. Residues 20–40 form a helical membrane-spanning segment; the sequence is MFWVLSLFSLTLLFSTASAWW. The Periplasmic portion of the chain corresponds to 41 to 198; that stretch reads AALGSDQQIT…ESDRRLARAQ (158 aa). Residues 44–196 form a ligand-binding domain region; that stretch reads GSDQQITELD…MLESDRRLAR (153 aa). Benzoate is bound by residues R71 and N75. Residues R71, N75, and Y135 each contribute to the salicylate site. 3,4-dihydroxybenzoate is bound at residue 71-78; that stretch reads RSSANVSS. L-quinate is bound by residues 71 to 78, Y135, Q142, and N158; that span reads RSSANVSS. Q169 serves as a coordination point for 3,4-dihydroxybenzoate. Residues 199 to 219 traverse the membrane as a helical segment; that stretch reads LLSLCLLGVTVVLAVLCWAFI. Topologically, residues 220 to 550 are cytoplasmic; the sequence is AQRVLHPLRE…MTALVGRFKV (331 aa). The region spanning 221-273 is the HAMP domain; the sequence is QRVLHPLREAGGHFRRIASGDLSVPVQGQGNNEIGQLFHELQRMQQSQRDTLG. A Methyl-accepting transducer domain is found at 278–514; sequence CARQLDAAAT…EVDRNLLNIR (237 aa).

This sequence belongs to the methyl-accepting chemotaxis (MCP) protein family. In terms of assembly, ligand free PcaY_PP-ligand-binding domain (LBD) is present in a monomer-dimer equilibrium. Only the dimeric LBD is able to bind ligands which in turn causes dimer stabilization.

Its subcellular location is the cell inner membrane. In terms of biological role, chemotactic-signal transducers respond to changes in the concentration of attractants and repellents in the environment, transduce a signal from the outside to the inside of the cell, and facilitate sensory adaptation through the variation of the level of methylation. PcaY recognizes a wide range of compounds containing a C6-membered ring with a carboxylate group. Binds preferentially compounds that serve as carbon sources and among them those that rapidly promote growth. Tightest binding compounds are quinate, shikimate, 3-dehydroshikimate and protocatechuate, which are at the interception of the biosynthetic shikimate and catabolic quinate pathways. The protein is Methyl-accepting chemotaxis protein PcaY of Pseudomonas putida (strain ATCC 47054 / DSM 6125 / CFBP 8728 / NCIMB 11950 / KT2440).